Consider the following 231-residue polypeptide: Nerve growth factor (231 aa).

An N-terminal signal peptide occupies residues 1 to 18; the sequence is MSMLYYTLLIAILISVQA. A propeptide spanning residues 19–114 is cleaved from the precursor; sequence APKTKDHAPA…SLNKTIRAKR (96 aa). The interval 24–53 is disordered; sequence DHAPARSSAKSRIPHHTHRTKSLHHSHGKL. Over residues 35-50 the composition is skewed to basic residues; sequence RIPHHTHRTKSLHHSH. Asn63, Asn107, and Asn158 each carry an N-linked (GlcNAc...) asparagine glycan. Disulfide bonds link Cys128/Cys193, Cys171/Cys221, and Cys181/Cys223.

The protein belongs to the NGF-beta family. In terms of assembly, homodimer.

It is found in the secreted. Its function is as follows. Nerve growth factor is important for the development and maintenance of the sympathetic and sensory nervous systems. It stimulates division and differentiation of sympathetic and embryonic sensory neurons. This is Nerve growth factor (ngf) from Xenopus laevis (African clawed frog).